Reading from the N-terminus, the 79-residue chain is Small ribosomal subunit protein uS11 (79 aa).

A Phosphoserine modification is found at Ser-14. Glycyl lysine isopeptide (Lys-Gly) (interchain with G-Cter in SUMO2) cross-links involve residues Lys-59 and Lys-61.

Belongs to the universal ribosomal protein uS11 family. In terms of assembly, component of the small ribosomal subunit. Part of the small subunit (SSU) processome, composed of more than 70 proteins and the RNA chaperone small nucleolar RNA (snoRNA) U3.

It localises to the cytoplasm. It is found in the nucleus. Its subcellular location is the nucleolus. In terms of biological role, component of the small ribosomal subunit. The ribosome is a large ribonucleoprotein complex responsible for the synthesis of proteins in the cell. Part of the small subunit (SSU) processome, first precursor of the small eukaryotic ribosomal subunit. During the assembly of the SSU processome in the nucleolus, many ribosome biogenesis factors, an RNA chaperone and ribosomal proteins associate with the nascent pre-rRNA and work in concert to generate RNA folding, modifications, rearrangements and cleavage as well as targeted degradation of pre-ribosomal RNA by the RNA exosome. The sequence is that of Small ribosomal subunit protein uS11 (RPS14) from Sus scrofa (Pig).